The chain runs to 486 residues: Cobyric acid synthase (486 aa).

Positions 248 to 439 (VLRIVVPALP…LHGLFDTPHA (192 aa)) constitute a GATase cobBQ-type domain. Residue Cys-328 is the Nucleophile of the active site. Residue His-431 is part of the active site.

It belongs to the CobB/CobQ family. CobQ subfamily.

The protein operates within cofactor biosynthesis; adenosylcobalamin biosynthesis. Its function is as follows. Catalyzes amidations at positions B, D, E, and G on adenosylcobyrinic A,C-diamide. NH(2) groups are provided by glutamine, and one molecule of ATP is hydrogenolyzed for each amidation. The chain is Cobyric acid synthase from Burkholderia mallei (strain ATCC 23344).